Here is a 563-residue protein sequence, read N- to C-terminus: Zinc finger protein 503 (563 aa).

A compositionally biased stretch (polar residues) spans 1-10 (MITSPSASRN). 2 disordered regions span residues 1–48 (MITS…PLRQ) and 101–226 (SQIG…TSVS). Composition is skewed to low complexity over residues 19-33 (SSSSSSRNNSSAVAS) and 112-122 (SKLSSVTSNGS). Residues 174–194 (ATCQPFTPRTGSPNSSTSASP) show a composition bias toward polar residues. Over residues 199-211 (GKGERDEKKDSDC) the composition is skewed to basic and acidic residues. Residues 212-226 (NKNCSSDGSAPTSVS) show a composition bias toward polar residues. The C2H2-type zinc-finger motif lies at 431-459 (HVCNWVSANGPCDKRFSSSEELLNHLRTH).

Belongs to the Elbow/Noc family. As to quaternary structure, interacts with nlz1.

The protein localises to the nucleus. In terms of biological role, required for segmental gene expression during hindbrain development. May function as a transcriptional repressor. The polypeptide is Zinc finger protein 503 (znf503) (Danio rerio (Zebrafish)).